A 236-amino-acid polypeptide reads, in one-letter code: Protein-S-isoprenylcysteine O-methyltransferase (236 aa).

The next 4 helical transmembrane spans lie at 3 to 23 (NLHTSIAVASICLTSAFLGCV), 24 to 44 (FGLGFFVWIIYGYSIGGFFAF), 76 to 96 (AYWLAMLVGLLECLLSGGKSF), and 108 to 128 (FLINFIFSVYQTSALGFLCLG). S-adenosyl-L-methionine-binding positions include 155 to 158 (HLLV), Tyr163, and 168 to 171 (HPSY). The chain crosses the membrane as a helical span at residues 174–194 (FFIWALGTQMLLGNFVSTLLF). Arg205 is a binding site for substrate. Glu209 lines the S-adenosyl-L-methionine pocket.

Belongs to the class VI-like SAM-binding methyltransferase superfamily. Isoprenylcysteine carboxyl methyltransferase family.

The protein resides in the membrane. The catalysed reaction is [protein]-C-terminal S-[(2E,6E)-farnesyl]-L-cysteine + S-adenosyl-L-methionine = [protein]-C-terminal S-[(2E,6E)-farnesyl]-L-cysteine methyl ester + S-adenosyl-L-homocysteine. Its function is as follows. Mediates C-terminal methylation of the isoprenylated C-terminal cysteine in M-factor. The sequence is that of Protein-S-isoprenylcysteine O-methyltransferase (mam4) from Schizosaccharomyces pombe (strain 972 / ATCC 24843) (Fission yeast).